The primary structure comprises 310 residues: AMMECR1-like protein (310 aa).

The segment at 26 to 95 (LSGSGTHSHG…LSPLPRPNGT (70 aa)) is disordered. The segment covering 28-66 (GSGTHSHGNQSTTVPGSSSGPLQNHQHVDSSSGRENVSD) has biased composition (polar residues). The residue at position 74 (Ser74) is a Phosphoserine. One can recognise an AMMECR1 domain in the interval 97–291 (NTTKNLVVTA…ISYAEYIASR (195 aa)).

The sequence is that of AMMECR1-like protein (AMMECR1L) from Homo sapiens (Human).